A 120-amino-acid polypeptide reads, in one-letter code: uncharacterized protein (120 aa).

The chain crosses the membrane as a helical span at residues 22 to 44 (ITVASCIGAAQGALFSIASALLL). The N-linked (GlcNAc...) asparagine glycan is linked to Asn114.

It is found in the membrane. This is an uncharacterized protein from Saccharomyces cerevisiae (strain ATCC 204508 / S288c) (Baker's yeast).